The chain runs to 107 residues: UPF0145 protein ESA_02470 (107 aa).

This sequence belongs to the UPF0145 family.

The polypeptide is UPF0145 protein ESA_02470 (Cronobacter sakazakii (strain ATCC BAA-894) (Enterobacter sakazakii)).